The sequence spans 219 residues: Octanoyltransferase (219 aa).

The 176-residue stretch at 31–206 folds into the BPL/LPL catalytic domain; sequence TASADEIWLV…ECLRLMKASA (176 aa). Substrate is bound by residues 70–77, 137–139, and 150–152; these read RGGQVTFH, SLG, and GLA. Cysteine 168 (acyl-thioester intermediate) is an active-site residue.

This sequence belongs to the LipB family.

The protein resides in the cytoplasm. The enzyme catalyses octanoyl-[ACP] + L-lysyl-[protein] = N(6)-octanoyl-L-lysyl-[protein] + holo-[ACP] + H(+). It functions in the pathway protein modification; protein lipoylation via endogenous pathway; protein N(6)-(lipoyl)lysine from octanoyl-[acyl-carrier-protein]: step 1/2. Its function is as follows. Catalyzes the transfer of endogenously produced octanoic acid from octanoyl-acyl-carrier-protein onto the lipoyl domains of lipoate-dependent enzymes. Lipoyl-ACP can also act as a substrate although octanoyl-ACP is likely to be the physiological substrate. The polypeptide is Octanoyltransferase (Sodalis glossinidius (strain morsitans)).